Reading from the N-terminus, the 842-residue chain is Circularly permutated Ras protein 1 (842 aa).

Residues 62–66, 121–124, and 181–188 each bind GTP; these read DTAGQ, NKVD, and GGGGVGKS. Residues 253–274 form a disordered region; that stretch reads SGKDKQPSPQQAASPSTIDRTG. Residues 259 to 274 are compositionally biased toward polar residues; the sequence is PSPQQAASPSTIDRTG. In terms of domain architecture, VWFA spans 377 to 627; sequence IIIYCIDVSG…TQNPMIATDV (251 aa).

Belongs to the small GTPase superfamily. CpRas family.

In Dictyostelium discoideum (Social amoeba), this protein is Circularly permutated Ras protein 1 (cpras1).